We begin with the raw amino-acid sequence, 749 residues long: Catalase-peroxidase (749 aa).

A compositionally biased stretch (basic and acidic residues) spans 1-12 (MSSDTSDTRPPH). A disordered region spans residues 1–40 (MSSDTSDTRPPHSDSGTQSNSESENPIIDSPEPKAHAPLT). Positions 14–24 (DSGTQSNSESE) are enriched in polar residues. The tryptophyl-tyrosyl-methioninium (Trp-Tyr) (with M-266) cross-link spans 113 to 240 (WHAAGTYRIF…FGATTMGLIY (128 aa)). The active-site Proton acceptor is His-114. Residues 240 to 266 (YVNPEGPEGKPDPLAAAHDIRETFGRM) constitute a cross-link (tryptophyl-tyrosyl-methioninium (Tyr-Met) (with W-113)). His-281 contacts heme b.

Belongs to the peroxidase family. Peroxidase/catalase subfamily. Homodimer or homotetramer. Heme b is required as a cofactor. Post-translationally, formation of the three residue Trp-Tyr-Met cross-link is important for the catalase, but not the peroxidase activity of the enzyme.

It carries out the reaction H2O2 + AH2 = A + 2 H2O. The enzyme catalyses 2 H2O2 = O2 + 2 H2O. Its function is as follows. Bifunctional enzyme with both catalase and broad-spectrum peroxidase activity. This chain is Catalase-peroxidase, found in Mycobacterium sp. (strain JLS).